Reading from the N-terminus, the 292-residue chain is Ribosomal RNA small subunit methyltransferase H (292 aa).

S-adenosyl-L-methionine is bound by residues 32–34 (GGH), aspartate 51, leucine 87, aspartate 101, and glutamine 108.

The protein belongs to the methyltransferase superfamily. RsmH family.

It is found in the cytoplasm. It catalyses the reaction cytidine(1402) in 16S rRNA + S-adenosyl-L-methionine = N(4)-methylcytidine(1402) in 16S rRNA + S-adenosyl-L-homocysteine + H(+). Its function is as follows. Specifically methylates the N4 position of cytidine in position 1402 (C1402) of 16S rRNA. This chain is Ribosomal RNA small subunit methyltransferase H, found in Pseudothermotoga lettingae (strain ATCC BAA-301 / DSM 14385 / NBRC 107922 / TMO) (Thermotoga lettingae).